A 784-amino-acid chain; its full sequence is Kinesin-like protein 6 (784 aa).

The Kinesin motor domain maps to 6–389 (SISVAVRVRP…LKYGNRAKNI (384 aa)). An ATP-binding site is contributed by 134 to 141 (GATGCGKT). 2 coiled-coil regions span residues 405–440 (SEYVRTIYELRQKVSILQKRIAEESKQLALNKEVRK) and 463–483 (RDLQKSLIEHVRTLRRIEDEI). The tract at residues 677–715 (SEVPTTSSVPPVEIKNKDSKPKVEKSLDKHNMNNDRSFL) is disordered. Residues 690–709 (IKNKDSKPKVEKSLDKHNMN) are compositionally biased toward basic and acidic residues.

This sequence belongs to the TRAFAC class myosin-kinesin ATPase superfamily. Kinesin family. Kinesin II subfamily. Heterodimer with klp5.

Its subcellular location is the cytoplasm. The protein localises to the cytoskeleton. The protein resides in the chromosome. It is found in the centromere. It localises to the kinetochore. Its subcellular location is the spindle. Has a role in establishing metaphase during mitosis. Required for chromosome segregation where it generates tension during kinetochore capturing. The polypeptide is Kinesin-like protein 6 (klp6) (Schizosaccharomyces pombe (strain 972 / ATCC 24843) (Fission yeast)).